Reading from the N-terminus, the 847-residue chain is Capsid-associated protein AC83 (847 aa).

Residues 1 to 19 (MMSGVMLLMLAIFLIIAFT) form the signal peptide. Residues 148-197 (CVPVPPCDNKSAGLYPMDERLLDTLVLNQHLDKDYSTNAHLYHPTFYLRC) form a C2HC BV-type zinc finger. Residues N156 and N211 are each glycosylated (N-linked (GlcNAc...) asparagine; by host). Intrachain disulfides connect C208–C221 and C261–C274. Residues 224–282 (NELCENRPDGYILSYFPSNLLVNQFMQCVNGRHVVGECPANKIFDRNLMSCVEAHPCAF) enclose the Chitin-binding type-2 domain. N-linked (GlcNAc...) asparagine; by host glycans are attached at residues N306, N337, N500, N592, N613, and N639. Residues 665-698 (DHWVVAPPTAPPPPPEPEPEPEPEPEPEPELPSP) are disordered. A compositionally biased stretch (acidic residues) spans 681 to 693 (PEPEPEPEPEPEP).

It is found in the virion. Functionally, plays an essential role in nucleocapsid assembly. Essential for the establishment of efficient per os infection. This is Capsid-associated protein AC83 (p95) from Autographa californica nuclear polyhedrosis virus (AcMNPV).